The sequence spans 755 residues: Large structural phosphoprotein (755 aa).

Disordered regions lie at residues 312–333 and 522–555; these read ESSS…IKTE and QSFD…STKT. The span at 535 to 555 shows a compositional bias: polar residues; that stretch reads PQDQKSIKQKNGNKANSSTKT.

This sequence belongs to the herpesviridae large structural phosphoprotein family. Post-translationally, phosphorylated at multiple sites.

The protein resides in the virion tegument. This Homo sapiens (Human) protein is Large structural phosphoprotein (U11).